The chain runs to 473 residues: Ribulose bisphosphate carboxylase large chain (473 aa).

Residues Asn-116 and Thr-166 each coordinate substrate. The Proton acceptor role is filled by Lys-168. Residue Lys-170 participates in substrate binding. The Mg(2+) site is built by Lys-194, Asp-196, and Glu-197. An N6-carboxylysine modification is found at Lys-194. Residue His-287 is the Proton acceptor of the active site. 3 residues coordinate substrate: Arg-288, His-320, and Ser-372.

This sequence belongs to the RuBisCO large chain family. Type I subfamily. As to quaternary structure, heterohexadecamer of 8 large chains and 8 small chains. Requires Mg(2+) as cofactor.

It catalyses the reaction 2 (2R)-3-phosphoglycerate + 2 H(+) = D-ribulose 1,5-bisphosphate + CO2 + H2O. The enzyme catalyses D-ribulose 1,5-bisphosphate + O2 = 2-phosphoglycolate + (2R)-3-phosphoglycerate + 2 H(+). RuBisCO catalyzes two reactions: the carboxylation of D-ribulose 1,5-bisphosphate, the primary event in carbon dioxide fixation, as well as the oxidative fragmentation of the pentose substrate. Both reactions occur simultaneously and in competition at the same active site. The polypeptide is Ribulose bisphosphate carboxylase large chain (Methylococcus capsulatus (strain ATCC 33009 / NCIMB 11132 / Bath)).